A 730-amino-acid chain; its full sequence is Pentatricopeptide repeat-containing protein At5g64320, mitochondrial (730 aa).

The transit peptide at Met-1 to Gln-18 directs the protein to the mitochondrion. 17 PPR repeats span residues Ser-110–Phe-144, Lys-145–Val-175, Thr-181–Pro-215, Thr-216–Pro-250, Asn-251–Pro-285, Asp-286–Pro-320, Asp-321–Pro-351, Glu-352–Pro-387, Asp-388–Pro-422, Asn-423–Pro-457, Asn-458–Pro-492, Asp-493–Ala-527, Asn-528–Leu-562, Asp-563–Pro-597, Ser-598–Pro-632, Asp-633–Pro-667, and Asp-668–Pro-702.

This sequence belongs to the PPR family. P subfamily.

The protein localises to the mitochondrion. The sequence is that of Pentatricopeptide repeat-containing protein At5g64320, mitochondrial from Arabidopsis thaliana (Mouse-ear cress).